We begin with the raw amino-acid sequence, 284 residues long: RCS-specific HTH-type transcriptional activator RclR (284 aa).

C21 and C89 are oxidised to a cystine. The HTH araC/xylS-type domain maps to 177–278 (PRLGAVIQQM…GCTPGEYRER (102 aa)). 2 consecutive DNA-binding regions (H-T-H motif) follow at residues 197 to 218 (ESLA…RDVS) and 245 to 268 (VVVI…VREF).

Its activity is regulated as follows. Oxydation of Cys-21 leads to partial activation of RclR, followed by the formation of an intramolecular disulfide bond between Cys-21 and Cys-89, which stabilizes the active form of RclR. Functionally, involved in reactive chlorine species (RCS) stress resistance. Up-regulates, in response to hypochlorous acid (HOCl), the expression of three genes essential for survival of RCS stress (rclA, rclB and rclC) and its own expression. In Escherichia coli (strain K12), this protein is RCS-specific HTH-type transcriptional activator RclR (rclR).